Consider the following 502-residue polypeptide: Transmembrane prolyl 4-hydroxylase (502 aa).

The tract at residues Met1 to His29 is disordered. The Cytoplasmic segment spans residues Met1 to Tyr60. A helical; Signal-anchor for type II membrane protein transmembrane segment spans residues Phe61–Phe81. Residues Val82–Leu502 are Lumenal-facing. Positions Glu89–Leu111 are disordered. 2 consecutive EF-hand domains span residues Thr185 to Trp220 and Pro224 to Lys259. Ca(2+) is bound by residues Asp198, Asn200, Asp202, His204, Glu209, Asp237, Asp239, Asp241, and Glu248. The Fe2OG dioxygenase domain maps to Leu310–Val460. Residues His328 and Asp330 each contribute to the Fe cation site. Asn348 and Asn368 each carry an N-linked (GlcNAc...) asparagine glycan. Glu374 provides a ligand contact to Fe cation. Residue Asn382 is glycosylated (N-linked (GlcNAc...) asparagine). Lys451 is a binding site for 2-oxoglutarate.

As to quaternary structure, homodimer. Requires Fe(2+) as cofactor. L-ascorbate is required as a cofactor. Post-translationally, glycosylated. In terms of tissue distribution, widely expressed with highest levels in adult pancreas, heart, skeletal muscle, brain, placenta, kidney and adrenal gland. Expressed at lower levels in epiphyseal cartilage and in fibroblasts.

It localises to the endoplasmic reticulum membrane. It catalyses the reaction L-prolyl-[hypoxia-inducible factor alpha subunit] + 2-oxoglutarate + O2 = trans-4-hydroxy-L-prolyl-[hypoxia-inducible factor alpha subunit] + succinate + CO2. Its function is as follows. Catalyzes the post-translational formation of 4-hydroxyproline in hypoxia-inducible factor (HIF) alpha proteins. Hydroxylates HIF1A at 'Pro-402' and 'Pro-564'. May function as a cellular oxygen sensor and, under normoxic conditions, may target HIF through the hydroxylation for proteasomal degradation via the von Hippel-Lindau ubiquitination complex. The protein is Transmembrane prolyl 4-hydroxylase (P4HTM) of Homo sapiens (Human).